Reading from the N-terminus, the 40-residue chain is Conotoxin Bt14.16 (40 aa).

The propeptide occupies 1–18 (SDGRDAAVIYTESDVIAR). 2 disulfide bridges follow: C21-C36 and C24-C29.

The protein belongs to the conotoxin A superfamily. As to expression, expressed by the venom duct.

It localises to the secreted. Its function is as follows. Probable neurotoxin with unknown target. Possibly targets ion channels. This chain is Conotoxin Bt14.16, found in Conus betulinus (Beech cone).